The following is a 343-amino-acid chain: Low conductance mechanosensitive channel YnaI (343 aa).

The Periplasmic portion of the chain corresponds to 1-9; the sequence is MIAELFTNN. Residues 10–30 traverse the membrane as a helical segment; it reads ALNLVIIFGSCAALILMSFWF. Topologically, residues 31–40 are cytoplasmic; it reads RRGNRKRKGF. Residues 41–61 traverse the membrane as a helical segment; it reads LFHAVQFLIYTIIISAVGSII. Residues 62–77 are Periplasmic-facing; it reads NYVIENYKLKFITPGV. Residues 78–98 traverse the membrane as a helical segment; it reads IDFICTSLIAVILTIKLFLLI. Residues 99–125 are Cytoplasmic-facing; sequence NQFEKQQIKKGRDITSARIMSRIIKIT. The chain crosses the membrane as a helical span at residues 126 to 146; the sequence is IIVVLVLLYGEHFGMSLSGLL. Residue Thr147 is a topological domain, periplasmic. A helical membrane pass occupies residues 148-168; that stretch reads FGGIGGLAVGMAGKDILSNFF. Over 169-343 the chain is Cytoplasmic; sequence SGIMLYFDRP…DNITPPEQGR (175 aa).

Belongs to the MscS (TC 1.A.23) family. Homoheptamer.

The protein resides in the cell inner membrane. Its function is as follows. Mechanosensitive channel that protects cells against hypoosmotic stress when highly overexpressed. The chain is Low conductance mechanosensitive channel YnaI (ynaI) from Escherichia coli (strain K12).